Consider the following 559-residue polypeptide: Formate--tetrahydrofolate ligase (559 aa).

Residue 68–75 (TPAGEGKS) coordinates ATP.

This sequence belongs to the formate--tetrahydrofolate ligase family.

The enzyme catalyses (6S)-5,6,7,8-tetrahydrofolate + formate + ATP = (6R)-10-formyltetrahydrofolate + ADP + phosphate. It participates in one-carbon metabolism; tetrahydrofolate interconversion. The polypeptide is Formate--tetrahydrofolate ligase (Clostridium tetani (strain Massachusetts / E88)).